A 334-amino-acid chain; its full sequence is S-adenosylmethionine:tRNA ribosyltransferase-isomerase (334 aa).

It belongs to the QueA family. As to quaternary structure, monomer.

Its subcellular location is the cytoplasm. It catalyses the reaction 7-aminomethyl-7-carbaguanosine(34) in tRNA + S-adenosyl-L-methionine = epoxyqueuosine(34) in tRNA + adenine + L-methionine + 2 H(+). It participates in tRNA modification; tRNA-queuosine biosynthesis. Transfers and isomerizes the ribose moiety from AdoMet to the 7-aminomethyl group of 7-deazaguanine (preQ1-tRNA) to give epoxyqueuosine (oQ-tRNA). The chain is S-adenosylmethionine:tRNA ribosyltransferase-isomerase from Thermosipho melanesiensis (strain DSM 12029 / CIP 104789 / BI429).